The following is a 418-amino-acid chain: D-inositol 3-phosphate glycosyltransferase (418 aa).

Residue His9 participates in 1D-myo-inositol 3-phosphate binding. UDP-N-acetyl-alpha-D-glucosamine is bound by residues 15–16 (QP) and Gly23. Residues 20 to 25 (DSGGMN), Lys78, Tyr110, Thr134, and Arg154 each bind 1D-myo-inositol 3-phosphate. UDP-N-acetyl-alpha-D-glucosamine contacts are provided by Arg231, Lys236, and Arg294. Tyr303, Arg304, and Ala306 together coordinate Mg(2+). The UDP-N-acetyl-alpha-D-glucosamine site is built by Glu316 and Glu324. A Mg(2+)-binding site is contributed by Thr330.

It belongs to the glycosyltransferase group 1 family. MshA subfamily. As to quaternary structure, homodimer.

It carries out the reaction 1D-myo-inositol 3-phosphate + UDP-N-acetyl-alpha-D-glucosamine = 1D-myo-inositol 2-acetamido-2-deoxy-alpha-D-glucopyranoside 3-phosphate + UDP + H(+). Its function is as follows. Catalyzes the transfer of a N-acetyl-glucosamine moiety to 1D-myo-inositol 3-phosphate to produce 1D-myo-inositol 2-acetamido-2-deoxy-glucopyranoside 3-phosphate in the mycothiol biosynthesis pathway. This Corynebacterium glutamicum (strain R) protein is D-inositol 3-phosphate glycosyltransferase.